A 130-amino-acid polypeptide reads, in one-letter code: Large ribosomal subunit protein bL17 (130 aa).

It belongs to the bacterial ribosomal protein bL17 family. As to quaternary structure, part of the 50S ribosomal subunit. Contacts protein L32.

In Nitrosomonas eutropha (strain DSM 101675 / C91 / Nm57), this protein is Large ribosomal subunit protein bL17.